Here is a 1042-residue protein sequence, read N- to C-terminus: Disintegrin and metalloproteinase domain-containing protein unc-71 (1042 aa).

Residues 1 to 23 form the signal peptide; sequence MICASKITMLGLLVMCTLGGVLG. Residues 24–746 are Extracellular-facing; the sequence is KVDIRQTTAN…NIGTTLETAT (723 aa). 2 N-linked (GlcNAc...) asparagine glycosylation sites follow: Asn-103 and Asn-155. Residues 227-431 enclose the Peptidase M12B domain; that stretch reads KYVEVALIAD…GNIQCLLNKP (205 aa). 4 disulfide bridges follow: Cys-338–Cys-426, Cys-378–Cys-410, Cys-380–Cys-386, and Cys-496–Cys-516. The Disintegrin domain occupies 437–524; that stretch reads LRECGNGVVD…DCPPDGHLID (88 aa). The N-linked (GlcNAc...) asparagine glycan is linked to Asn-538. The EGF-like domain occupies 662–699; it reads SATACPTNNLALLCSGHGHCTTTARCVCFNGWSGVACD. Cystine bridges form between Cys-666–Cys-681, Cys-675–Cys-687, and Cys-689–Cys-698. N-linked (GlcNAc...) asparagine glycosylation is present at Asn-703. A helical transmembrane segment spans residues 747–767; sequence LFAILLGFGVFLLLCLVCLML. The Cytoplasmic segment spans residues 768 to 1042; sequence CYRRRSVVEI…KLEMTNSMHN (275 aa). Disordered stretches follow at residues 779 to 809, 825 to 850, and 980 to 1028; these read KPSD…RKRK, DERD…RRNG, and HDVG…PSLF. The span at 825-836 shows a compositional bias: basic and acidic residues; it reads DERDSTSLRSRD. Positions 1002-1027 are enriched in polar residues; sequence DSPTLVNGASSSSTSNNYNFRQSPSL.

It localises to the cell membrane. Involved in the migration of sex myoblasts (progenitors of egg-laying muscles), Q neuroblasts and BDU interneurons during development. Involved in axon branching and guidance of neurons including GABAergic type D motor neurons. Promotes sex myoblast migration and positioning independently of gonad attraction cues. May act downstream of mig-13 in order to promote the guidance, migration and positioning of Q neuroblasts and their descendants along the anteroposterior body axis. Required for coordinated movements. The protein is Disintegrin and metalloproteinase domain-containing protein unc-71 of Caenorhabditis elegans.